A 370-amino-acid chain; its full sequence is GTPase Obg (370 aa).

An Obg domain is found at 1 to 159 (MKFVDEAYID…KKLKLELRVL (159 aa)). The OBG-type G domain maps to 160 to 333 (ADVGLLGMPN…LVQAIYQHVA (174 aa)). GTP contacts are provided by residues 166-173 (GMPNAGKS), 191-195 (FTTLH), 213-216 (DVPG), 283-286 (NKLD), and 314-316 (SAL). Mg(2+) is bound by residues serine 173 and threonine 193. Positions 346 to 370 (FAEPEADESDDEPRFAPQADDPRFR) are disordered.

The protein belongs to the TRAFAC class OBG-HflX-like GTPase superfamily. OBG GTPase family. In terms of assembly, monomer. The cofactor is Mg(2+).

It is found in the cytoplasm. Its function is as follows. An essential GTPase which binds GTP, GDP and possibly (p)ppGpp with moderate affinity, with high nucleotide exchange rates and a fairly low GTP hydrolysis rate. Plays a role in control of the cell cycle, stress response, ribosome biogenesis and in those bacteria that undergo differentiation, in morphogenesis control. This is GTPase Obg from Methylibium petroleiphilum (strain ATCC BAA-1232 / LMG 22953 / PM1).